A 365-amino-acid chain; its full sequence is tRNA/tmRNA (uracil-C(5))-methyltransferase (365 aa).

S-adenosyl-L-methionine-binding residues include glutamine 189, tyrosine 217, asparagine 222, glutamate 238, and aspartate 298. The active-site Nucleophile is the cysteine 323. Residue glutamate 357 is the Proton acceptor of the active site.

Belongs to the class I-like SAM-binding methyltransferase superfamily. RNA M5U methyltransferase family. TrmA subfamily.

The catalysed reaction is uridine(54) in tRNA + S-adenosyl-L-methionine = 5-methyluridine(54) in tRNA + S-adenosyl-L-homocysteine + H(+). It carries out the reaction uridine(341) in tmRNA + S-adenosyl-L-methionine = 5-methyluridine(341) in tmRNA + S-adenosyl-L-homocysteine + H(+). In terms of biological role, dual-specificity methyltransferase that catalyzes the formation of 5-methyluridine at position 54 (m5U54) in all tRNAs, and that of position 341 (m5U341) in tmRNA (transfer-mRNA). In Proteus mirabilis (strain HI4320), this protein is tRNA/tmRNA (uracil-C(5))-methyltransferase.